The sequence spans 261 residues: Small ribosomal subunit protein eS4 (261 aa).

Residues 42-104 (LPLVIFLRNR…TGEFFRLIYD (63 aa)) enclose the S4 RNA-binding domain.

It belongs to the eukaryotic ribosomal protein eS4 family.

The polypeptide is Small ribosomal subunit protein eS4 (RpS4) (Carabus granulatus (Ground beetle)).